Consider the following 156-residue polypeptide: Small ribosomal subunit protein uS7 (156 aa).

The protein belongs to the universal ribosomal protein uS7 family. As to quaternary structure, part of the 30S ribosomal subunit. Contacts proteins S9 and S11.

One of the primary rRNA binding proteins, it binds directly to 16S rRNA where it nucleates assembly of the head domain of the 30S subunit. Is located at the subunit interface close to the decoding center, probably blocks exit of the E-site tRNA. In Erwinia tasmaniensis (strain DSM 17950 / CFBP 7177 / CIP 109463 / NCPPB 4357 / Et1/99), this protein is Small ribosomal subunit protein uS7.